Reading from the N-terminus, the 460-residue chain is Probable lipase C14C8.15 (460 aa).

Topologically, residues 1-16 (MTLNGNIMKYCLEKGE) are cytoplasmic. Residues 17–37 (ILISFLLIALESMFRICTVIL) form a helical; Signal-anchor for type II membrane protein membrane-spanning segment. The Lumenal segment spans residues 38 to 460 (PSPLRNWFYE…LVDGVMNHTI (423 aa)). Serine 214 serves as the catalytic Nucleophile. Asparagine 308 carries N-linked (GlcNAc...) asparagine glycosylation. Active-site charge relay system residues include aspartate 382 and histidine 408. N-linked (GlcNAc...) asparagine glycosylation occurs at asparagine 457.

The protein belongs to the AB hydrolase superfamily. Lipase family.

Its subcellular location is the golgi apparatus. It localises to the membrane. Probable lipase. The polypeptide is Probable lipase C14C8.15 (Schizosaccharomyces pombe (strain 972 / ATCC 24843) (Fission yeast)).